We begin with the raw amino-acid sequence, 330 residues long: Fructose-1,6-bisphosphatase class 1 (330 aa).

4 residues coordinate Mg(2+): Glu-84, Asp-103, Leu-105, and Asp-106. Substrate contacts are provided by residues 106–109 (DGSS), Asn-196, and Lys-262. Glu-268 contributes to the Mg(2+) binding site.

This sequence belongs to the FBPase class 1 family. In terms of assembly, homotetramer. The cofactor is Mg(2+).

It is found in the cytoplasm. The enzyme catalyses beta-D-fructose 1,6-bisphosphate + H2O = beta-D-fructose 6-phosphate + phosphate. It participates in carbohydrate biosynthesis; gluconeogenesis. The sequence is that of Fructose-1,6-bisphosphatase class 1 from Shewanella sp. (strain ANA-3).